Consider the following 132-residue polypeptide: MGPRVLQPPLLLLLLALLLAALPCGAEEASPLRPAQVTLSPPPAVTNGSQPGAPHNSTHTRPPGASGSALTRSFYVILGFCGLTALYFLIRAFRLKKPQRRRYGLLANTEDPTEMASLDSDEETVFESRNLR.

Positions 1–26 (MGPRVLQPPLLLLLLALLLAALPCGA) are cleaved as a signal peptide. A disordered region spans residues 34-66 (PAQVTLSPPPAVTNGSQPGAPHNSTHTRPPGAS). Polar residues predominate over residues 46 to 60 (TNGSQPGAPHNSTHT). Asn-47 is a glycosylation site (N-linked (GlcNAc...) asparagine). The helical transmembrane segment at 73-93 (SFYVILGFCGLTALYFLIRAF) threads the bilayer. Thr-113 carries the phosphothreonine modification. The interval 113–132 (TEMASLDSDEETVFESRNLR) is disordered. Phosphoserine is present on residues Ser-117 and Ser-120.

This sequence belongs to the FAM174 family.

Its subcellular location is the membrane. This chain is Protein FAM174C, found in Homo sapiens (Human).